The chain runs to 346 residues: Tryptophan--tRNA ligase (346 aa).

Residues 11–13 (RPT) and 19–20 (GH) contribute to the ATP site. The short motif at 12-20 (PTGKLHLGH) is the 'HIGH' region element. Position 143 (Asp-143) interacts with L-tryptophan. Residues 155-157 (GKD), Leu-193, and 201-205 (KMSKS) each bind ATP. Residues 201–205 (KMSKS) carry the 'KMSKS' region motif.

It belongs to the class-I aminoacyl-tRNA synthetase family. As to quaternary structure, homodimer.

It is found in the cytoplasm. The enzyme catalyses tRNA(Trp) + L-tryptophan + ATP = L-tryptophyl-tRNA(Trp) + AMP + diphosphate + H(+). Functionally, catalyzes the attachment of tryptophan to tRNA(Trp). This is Tryptophan--tRNA ligase from Chlamydia muridarum (strain MoPn / Nigg).